Here is a 453-residue protein sequence, read N- to C-terminus: MRLCVIGAGYVGLVTAACFAEMGNQVRCVERDRERVARLRRGEMPIYEPGLESILRDQLDAARLTFTASLAEGLADAEVVFIAVGTPCGEDGSADLSHVLAVAEQLGAQLRQACIVVNKSTVPVGTAERVEEIIRLGLARRRKRFRVAVASNPEFLKEGSAVDDFRRPDRVIIGSAETQAGETLRQLYAPFLRNHERVLLMGRREAEFSKYAANAFLATKISFMNEMAGLCALTGVDIEDVRRGMGSDKRIGTHFIYAGCGYGGSCFPKDVRALIRSAEQQGYDSQILRAVEARNARQKELLFETLGELFQGRWQGRTVALWGLAFKPGTDDLREAPSLVLLEALLRHGVRVRAHDPVANAGVAARYPEAVACARLTLHDSPYAAVEGADALVLVTEWKQFRQPDFQKIRGSMRTPLLVDGRNLYAPARMAELGFIYQGIGRPRAGHCKASAA.

NAD(+) contacts are provided by residues 2–19 (RLCV…AACF), V11, T121, and E158. Residues 154-158 (EFLKE), K210, N214, 255-259 (FIYAG), and G263 contribute to the substrate site. C266 (nucleophile) is an active-site residue. K269 provides a ligand contact to NAD(+). K327 is a binding site for substrate. Residue R334 participates in NAD(+) binding.

It belongs to the UDP-glucose/GDP-mannose dehydrogenase family.

It catalyses the reaction UDP-alpha-D-glucose + 2 NAD(+) + H2O = UDP-alpha-D-glucuronate + 2 NADH + 3 H(+). The protein operates within nucleotide-sugar biosynthesis; UDP-alpha-D-glucuronate biosynthesis; UDP-alpha-D-glucuronate from UDP-alpha-D-glucose: step 1/1. It participates in bacterial outer membrane biogenesis; lipopolysaccharide biosynthesis. This is UDP-glucose 6-dehydrogenase (udg) from Pseudomonas aeruginosa (strain ATCC 15692 / DSM 22644 / CIP 104116 / JCM 14847 / LMG 12228 / 1C / PRS 101 / PAO1).